Reading from the N-terminus, the 356-residue chain is Probable dual-specificity RNA methyltransferase RlmN (356 aa).

The active-site Proton acceptor is E92. Positions 98–336 (HKYGFSVCVT…CGVRLEHGTD (239 aa)) constitute a Radical SAM core domain. A disulfide bridge connects residues C105 and C341. [4Fe-4S] cluster contacts are provided by C112, C116, and C119. S-adenosyl-L-methionine contacts are provided by residues 164–165 (GE), S196, 219–221 (SLH), and N297. C341 functions as the S-methylcysteine intermediate in the catalytic mechanism.

Belongs to the radical SAM superfamily. RlmN family. [4Fe-4S] cluster is required as a cofactor.

The protein resides in the cytoplasm. The enzyme catalyses adenosine(2503) in 23S rRNA + 2 reduced [2Fe-2S]-[ferredoxin] + 2 S-adenosyl-L-methionine = 2-methyladenosine(2503) in 23S rRNA + 5'-deoxyadenosine + L-methionine + 2 oxidized [2Fe-2S]-[ferredoxin] + S-adenosyl-L-homocysteine. It catalyses the reaction adenosine(37) in tRNA + 2 reduced [2Fe-2S]-[ferredoxin] + 2 S-adenosyl-L-methionine = 2-methyladenosine(37) in tRNA + 5'-deoxyadenosine + L-methionine + 2 oxidized [2Fe-2S]-[ferredoxin] + S-adenosyl-L-homocysteine. Functionally, specifically methylates position 2 of adenine 2503 in 23S rRNA and position 2 of adenine 37 in tRNAs. The sequence is that of Probable dual-specificity RNA methyltransferase RlmN from Shouchella clausii (strain KSM-K16) (Alkalihalobacillus clausii).